The primary structure comprises 407 residues: MAPHLNIVPSMFVLLLLFISASKVQPDAFDVVAKFGAKADGKTDLSKPFLDAWKEACASVTPSTVVIPKGTYLLSKVNLEGPCKAPIEINVQGTIQAPADPSAFKDPNWVRFYSVENFKMFGGGIFDGQGSIAYEKNTCENREFRSKLPVNIRFDFVTNALIQDITSKDSKLFHINVFACKNITLERLKIEAPDESPNTDGIHMGKSEGVNIIASDIKTGDDCISIGDGTKNMVIKEITCGPGHGISIGSLGKFQNEEPVEGIKISNCTITNTSNGARIKTWPGEHGGAVSEIHFEDITMNNVSSPILIDQQYCPWNKCKKNEESKVKLSNISFKNIRGTSALPEAIKFICSGSSPCQNVELADIDIQHNGAEPATSQCLNVKPITIGKLNPIPCSGPVPKTPSATA.

An N-terminal signal peptide occupies residues 1–26 (MAPHLNIVPSMFVLLLLFISASKVQP). 2 PbH1 repeats span residues 180–206 (CKNITLERLKIEAPDESPNTDGIHMGK) and 207–228 (SEGVNIIASDIKTGDDCISIGD). Residue Asn-182 is glycosylated (N-linked (GlcNAc...) asparagine). The active-site Proton donor is the Asp-221. Cys-223 and Cys-240 are disulfide-bonded. Residue His-244 is part of the active site. 2 PbH1 repeats span residues 260 to 281 (VEGIKISNCTITNTSNGARIKT) and 290 to 311 (VSEIHFEDITMNNVSSPILIDQ). N-linked (GlcNAc...) asparagine glycosylation is found at Asn-267, Asn-272, Asn-302, and Asn-331. Cystine bridges form between Cys-351–Cys-357 and Cys-379–Cys-395. Residues 357–384 (CQNVELADIDIQHNGAEPATSQCLNVKP) form a PbH1 5 repeat.

The protein belongs to the glycosyl hydrolase 28 family. In terms of tissue distribution, pollen.

The protein localises to the secreted. It is found in the cell wall. It carries out the reaction (1,4-alpha-D-galacturonosyl)n+m + H2O = (1,4-alpha-D-galacturonosyl)n + (1,4-alpha-D-galacturonosyl)m.. In terms of biological role, may function in the depolymerization of the pectin in its walls during pollen tube elongation, or in that of the pistil during pollination. This chain is Polygalacturonase (G9), found in Gossypium barbadense (Sea Island cotton).